Consider the following 117-residue polypeptide: Glycine cleavage system H-like protein (117 aa).

Residues 21-103 enclose the Lipoyl-binding domain; it reads IVKLGLSSQM…ESEGWFVVLQ (83 aa). Lys62 carries the post-translational modification N6-lipoyllysine.

It belongs to the GcvH family. Requires (R)-lipoate as cofactor.

The polypeptide is Glycine cleavage system H-like protein (Chlamydia trachomatis serovar L2 (strain ATCC VR-902B / DSM 19102 / 434/Bu)).